The primary structure comprises 122 residues: Large ribosomal subunit protein uL14c (122 aa).

This sequence belongs to the universal ribosomal protein uL14 family. As to quaternary structure, part of the 50S ribosomal subunit.

Its subcellular location is the plastid. It is found in the chloroplast. In terms of biological role, binds to 23S rRNA. This is Large ribosomal subunit protein uL14c from Pleurastrum terricola (Filamentous green alga).